The primary structure comprises 475 residues: Exodeoxyribonuclease I (475 aa).

In terms of domain architecture, Exonuclease spans 13–192 (FHDYETFGTH…AMADVYATIA (180 aa)). 2 residues coordinate Mg(2+): aspartate 15 and glutamate 17. Substrate-binding residues include glutamate 17 and arginine 165. Position 186 (aspartate 186) interacts with Mg(2+). Residues 202 to 355 (PRLFDYLFTH…KVVAIFAEAE (154 aa)) enclose the ExoI SH3-like domain. The ExoI C-terminal domain occupies 358-475 (TPSDNVDAQL…ALWQYAEEIV (118 aa)).

As to quaternary structure, monomer. Interacts with ssb (via C-terminus); this interaction stimulates the exonuclease activity by recruiting the enzyme to its substrate. Mg(2+) is required as a cofactor.

It carries out the reaction Exonucleolytic cleavage in the 3'- to 5'-direction to yield nucleoside 5'-phosphates.. Its activity is regulated as follows. Inhibited by 10 mM EDTA. In terms of biological role, degrades single-stranded DNA (ssDNA) in a highly processive manner. Also functions as a DNA deoxyribophosphodiesterase that releases deoxyribose-phosphate moieties following the cleavage of DNA at an apurinic/apyrimidinic (AP) site by either an AP endonuclease or AP lyase. The chain is Exodeoxyribonuclease I (sbcB) from Escherichia coli (strain K12).